Here is a 412-residue protein sequence, read N- to C-terminus: Peptidase T (412 aa).

Position 84 (His-84) interacts with Zn(2+). Residue Asp-86 is part of the active site. Position 146 (Asp-146) interacts with Zn(2+). The Proton acceptor role is filled by Glu-179. The Zn(2+) site is built by Glu-180, Asp-202, and His-385.

Belongs to the peptidase M20B family. Zn(2+) serves as cofactor.

It is found in the cytoplasm. The catalysed reaction is Release of the N-terminal residue from a tripeptide.. Functionally, cleaves the N-terminal amino acid of tripeptides. The chain is Peptidase T from Haemophilus influenzae (strain 86-028NP).